The primary structure comprises 184 residues: Large ribosomal subunit protein uL22 (184 aa).

The interval 160 to 184 is disordered; the sequence is PEEEVAQKKKISQKKLKKQKLMARE. A compositionally biased stretch (basic residues) spans 167–184; that stretch reads KKKISQKKLKKQKLMARE.

It belongs to the universal ribosomal protein uL22 family. Component of the large ribosomal subunit.

The protein resides in the cytoplasm. Component of the large ribosomal subunit. The ribosome is a large ribonucleoprotein complex responsible for the synthesis of proteins in the cell. The protein is Large ribosomal subunit protein uL22 (RPL17) of Bos taurus (Bovine).